The chain runs to 2611 residues: Highly reducing polyketide synthase ATEG_07659 (2611 aa).

Residues 10–409 form the Ketosynthase family 3 (KS3) domain; that stretch reads SEPIAIIGLS…GTNSHVIVEG (400 aa). Residues cysteine 157, histidine 292, and histidine 330 each act as for beta-ketoacyl synthase activity in the active site. Positions 537-844 are malonyl-CoA:ACP transacylase (MAT) domain; sequence MVFTGQGAQW…VRFVEAFTDM (308 aa). The interval 969–1109 is N-terminal hotdog fold; that stretch reads HDLLGVLVPG…GLITVQMAAD (141 aa). The region spanning 969–1292 is the PKS/mFAS DH domain; it reads HDLLGVLVPG…CQSLGRSAPG (324 aa). Residues 970–1289 form a dehydratase (DH) domain region; the sequence is DLLGVLVPGT…GLVCQSLGRS (320 aa). Histidine 1001 acts as the Proton acceptor; for dehydratase activity in catalysis. Positions 1128-1292 are C-terminal hotdog fold; that stretch reads GYTRRIDPQD…CQSLGRSAPG (165 aa). Residue aspartate 1199 is the Proton donor; for dehydratase activity of the active site. Positions 1469-1602 are methyltransferase (CMet) domain; it reads FGQLKSLLAA…GATLLLMETT (134 aa). Positions 1898 to 2213 are enoyl reductase (ER) domain; that stretch reads GLLDTLAFGD…TGKHLGKLVL (316 aa). The tract at residues 2236–2416 is ketoreductase (KR) domain; sequence ASYLLVGGVG…AVSLDMGVIK (181 aa). Positions 2499–2509 are enriched in low complexity; sequence SRAQAQQAGGD. The interval 2499 to 2520 is disordered; that stretch reads SRAQAQQAGGDSDSEPLSAKLR. One can recognise a Carrier domain in the interval 2527–2604; that stretch reads AAARCVGDAI…ALALDVVAKS (78 aa). The residue at position 2564 (serine 2564) is an O-(pantetheine 4'-phosphoryl)serine.

It participates in secondary metabolite biosynthesis. Functionally, highly reducing polyketide synthase; part of the cluster B that mediates the biosynthesis of azasperpyranones, members of the azaphilone family that exhibit anti-cancer activities. Azasperpyranones are synthesized by 2 clusters, A and B. Cluster A is responsible for the production of the polyhydric phenol moiety while the azaphilonoid scaffold is produced by the cluster B. The non-reducing polyketide synthase ATEG_03629 produces 5-methyl orsellinic acid, which is then reduced to 5-methyl orsellinic aldehyde by the NRPS-like protein ATEG_03630. 5-methyl orsellinic aldehyde is then first hydroxylated by the FAD-dependent monooxygenase ATEG_03635 and subsequently hydroxylated by the cytochrome P450 monooxygenase ATEG_03631 to produce the unstable polyhydric phenol precursor of azasperpyranones. On the other hand, the polyketide synthase ATEG_07659 is responsible for producing the 3,5-dimethyloctadienone moiety from acetyl-CoA, three malonyl-CoA, and two S-adenosyl methionines (SAM). The 3,5-dimethyloctadienone moiety is then loaded onto the SAT domain of ATEG_07661 and extended with four malonyl-CoA and one SAM, which leads to the formation of 2,4-dihydroxy-6-(5,7-dimethyl-2-oxo-trans-3-trans-5-nonadienyl)-3-methylbenzaldehyde (compound 8) after reductive release and aldol condensation. The FAD-dependent monooxygenase ATEG_07662 is the next enzyme in the biosynthesis sequence and hydroxylates the side chain at the benzylic position of compound 8. In Aspergillus nidulans, afoF, the ortholog of the FAD-dependent oxygenase ATEG_07660, is the key enzyme for the biosynthesis of asperfuranone by catalyzing the hydroxylation at C-8 of to prevent the formation of a six-membered ring hemiacetal intermediate and thus facilitating the formation of a five-membered ring to produce asperfuranone. In Aspergillus terreus, ATEG_07660 is probably not functional, which leads to the formation of the six-membered ring hemiacetal intermediate presperpyranone instead of asperfuranone. Finally, ATEG_03636 is involved in the condensation of the polyhydric phenol moiety produced by cluster A and the perasperpyranone precursor produced by cluster B, to yield azasperpyranone A. Further modifications of azasperpyranone A result in the production of derivatives, including azasperpyranone B to F. This chain is Highly reducing polyketide synthase ATEG_07659, found in Aspergillus terreus (strain NIH 2624 / FGSC A1156).